Reading from the N-terminus, the 1130-residue chain is Roquin-1 (1130 aa).

7 residues coordinate Zn(2+): cysteine 14, cysteine 17, cysteine 33, histidine 35, cysteine 38, cysteine 50, and aspartate 53. The segment at 14-54 (CPICTQTFDETIRKPISLGCGHTVCKMCLNKLHRKACPFDQ) adopts an RING-type; degenerate zinc-finger fold. The segment at 128 to 176 (VLSRPMQRKLVTLVHCQLVEEEGRIRAMRAARSLGERTVTELILQHQNP) is HEPN-N. The tract at residues 177–326 (QQLSSNLWAA…MQSIIDKLQT (150 aa)) is ROQ. The HEPN-C stretch occupies residues 327 to 399 (PASFAQSVQE…GLVDYIQNHS (73 aa)). Residues 413 to 441 (KYKTYMCRDMKQRGGCPRGASCTFAHSQE) form a C3H1-type zinc finger. Position 462 is a phosphoserine (serine 462). Disordered regions lie at residues 493–567 (LPNG…DLPP) and 722–750 (PHPAQIRPSYPRDPPYSRLPPPQPHPSLD). A compositionally biased stretch (polar residues) spans 497-506 (IASSGSTVTQ). Serine 531 and serine 535 each carry phosphoserine. Pro residues-rich tracts occupy residues 553–567 (NPHPVPPRGPTDLPP) and 732–746 (PRDPPYSRLPPPQPH). Residues serine 861, serine 1107, and serine 1110 each carry the phosphoserine modification. The disordered stretch occupies residues 1100-1130 (KTSSLNLSEDSEGGGDNNDSQRSGVVSNSAP). A compositionally biased stretch (polar residues) spans 1116 to 1130 (NNDSQRSGVVSNSAP).

Interacts with DDX6 and EDC4. Interacts with CCR4-NOT deadenylase complex. Interacts with RC3H1; the interaction is RNA independent. Post-translationally, proteolytically cleaved after Arg-510 and Arg-579 by MALT1 in activated CD4(+) T cells; cleavage at Arg-510 and Arg-579 is critical for promoting RC3H1 degradation in response to T-cell receptor (TCR) stimulation, and hence is necessary for prolonging the stability of a set of mRNAs controlling Th17 cell differentiation. In terms of tissue distribution, widely expressed, with highest levels in lymph node and thymus and slightly lesser amounts in brain, lung, and spleen (at protein level). Very weak expression in heart, muscle, and kidney (at protein level). Expressed in CD4(+) helper T-cells (at protein level).

The protein resides in the cytoplasm. It localises to the P-body. It is found in the cytoplasmic granule. The enzyme catalyses S-ubiquitinyl-[E2 ubiquitin-conjugating enzyme]-L-cysteine + [acceptor protein]-L-lysine = [E2 ubiquitin-conjugating enzyme]-L-cysteine + N(6)-ubiquitinyl-[acceptor protein]-L-lysine.. The protein operates within protein modification; protein ubiquitination. In terms of biological role, post-transcriptional repressor of mRNAs containing a conserved stem loop motif, called constitutive decay element (CDE), which is often located in the 3'-UTR, as in HMGXB3, ICOS, IER3, NFKBID, NFKBIZ, PPP1R10, TNF, TNFRSF4 and in many more mRNAs. Cleaves translationally inactive mRNAs harboring a stem-loop (SL), often located in their 3'-UTRs, during the early phase of inflammation in a helicase UPF1-independent manner. Binds to CDE and promotes mRNA deadenylation and degradation. This process does not involve miRNAs. In follicular helper T (Tfh) cells, represses of ICOS and TNFRSF4/Ox40 expression, thus preventing spontaneous Tfh cell differentiation, germinal center B-cell differentiation in the absence of immunization and autoimmunity. In resting or LPS-stimulated macrophages, controls inflammation by suppressing TNF expression. Also recognizes CDE in its own mRNA and in that of paralogous RC3H2, possibly leading to feedback loop regulation. Inhibits cooperatively with ZC3H12A the differentiation of helper T cells Th17 in lungs. They repress target mRNA encoding the Th17 cell-promoting factors IL6, ICOS, REL, IRF4, NFKBID and NFKBIZ. The cooperation requires RNA-binding by RC3H1 and the nuclease activity of ZC3H12A. Recognizes and binds mRNAs containing a hexaloop stem-loop motif, called alternative decay element (ADE). Together with ZC3H12A, destabilizes TNFRSF4/OX40 mRNA by binding to the conserved stem loop structure in its 3'UTR. Able to interact with double-stranded RNA. miRNA-binding protein that regulates microRNA homeostasis. Enhances DICER-mediated processing of pre-MIR146a but reduces mature MIR146a levels through an increase of 3' end uridylation. Both inhibits ICOS mRNA expression and they may act together to exert the suppression. Acts as a ubiquitin E3 ligase. Pairs with E2 enzymes UBE2A, UBE2B, UBE2D2, UBE2F, UBE2G1, UBE2G2 and UBE2L3 and produces polyubiquitin chains. Shows the strongest activity when paired with UBE2N:UBE2V1 or UBE2N:UBE2V2 E2 complexes and generate both short and long polyubiquitin chains. The sequence is that of Roquin-1 from Mus musculus (Mouse).